Reading from the N-terminus, the 397-residue chain is Diphosphomevalonate decarboxylase (397 aa).

(R)-5-diphosphomevalonate contacts are provided by residues 19 to 22 (YWGK), R74, 153 to 158 (SGSACR), and T209. Positions 378-397 (GPGPQDTKSSLIDPETGLPR) are disordered.

It belongs to the diphosphomevalonate decarboxylase family. As to quaternary structure, homodimer.

The enzyme catalyses (R)-5-diphosphomevalonate + ATP = isopentenyl diphosphate + ADP + phosphate + CO2. The protein operates within isoprenoid biosynthesis; isopentenyl diphosphate biosynthesis via mevalonate pathway; isopentenyl diphosphate from (R)-mevalonate: step 3/3. Diphosphomevalonate decarboxylase; part of the second module of ergosterol biosynthesis pathway that includes the middle steps of the pathway. The second module is carried out in the vacuole and involves the formation of farnesyl diphosphate, which is also an important intermediate in the biosynthesis of ubiquinone, dolichol, heme and prenylated proteins. Activity by the mevalonate kinase ERG12 first converts mevalonate into 5-phosphomevalonate. 5-phosphomevalonate is then further converted to 5-diphosphomevalonate by the phosphomevalonate kinase ERG8. The diphosphomevalonate decarboxylase MVD1/ERG19 then produces isopentenyl diphosphate. The isopentenyl-diphosphate delta-isomerase IDI1 then catalyzes the 1,3-allylic rearrangement of the homoallylic substrate isopentenyl (IPP) to its highly electrophilic allylic isomer, dimethylallyl diphosphate (DMAPP). Finally the farnesyl diphosphate synthase ERG20 catalyzes the sequential condensation of isopentenyl pyrophosphate with dimethylallyl pyrophosphate, and then with the resultant geranylpyrophosphate to the ultimate product farnesyl pyrophosphate. The polypeptide is Diphosphomevalonate decarboxylase (Eremothecium gossypii (strain ATCC 10895 / CBS 109.51 / FGSC 9923 / NRRL Y-1056) (Yeast)).